Here is a 419-residue protein sequence, read N- to C-terminus: MTTQLEQAWELAKQRFAAVGIDVEEALRQLDRLPVSMHCWQGDDVAGFENPEGSLTGGIQSTGNYPGKARNATELRADLEQALRLIPGPKRLNLHAIYLESDTPIARDQIKPEHFKNWVEWAKANRLGLDFNPTCFSHPLSADGFTLSHPDAKIRQFWIDHCKASRRVSAYFGEQLGTPSVMNIWIPDGMKDITVDRLAPRQRLLEALDEVISEKFDPAHHIDAVESKLFGIGAESYTVGSNEFYMGYATSRQTALCLDAGHFHPTEVISDKISAAMLYVPRLLLHVSRPVRWDSDHVVLLDDETQAIASEIVRHNLFDRVHIGLDFFDASINRVAAWVIGTRNMKKALLRALLEPTDQLRQLEASGDYTARLALLEEQKSLPWQAVWEMYCQRHDTPTGSQWLDSVRTYEKEILSKRS.

Residues His262, Asp294, and Asp296 each coordinate Mn(2+).

It belongs to the rhamnose isomerase family. As to quaternary structure, homotetramer. Mn(2+) serves as cofactor.

Its subcellular location is the cytoplasm. It catalyses the reaction L-rhamnopyranose = L-rhamnulose. It participates in carbohydrate degradation; L-rhamnose degradation; glycerone phosphate from L-rhamnose: step 1/3. In terms of biological role, catalyzes the interconversion of L-rhamnose and L-rhamnulose. This Salmonella agona (strain SL483) protein is L-rhamnose isomerase.